Here is a 325-residue protein sequence, read N- to C-terminus: Homoserine O-succinyltransferase (325 aa).

Cysteine 142 functions as the Acyl-thioester intermediate in the catalytic mechanism. Substrate-binding residues include lysine 163 and serine 191. Histidine 234 (proton acceptor) is an active-site residue. The active site involves glutamate 236. Arginine 248 is a substrate binding site.

It belongs to the MetA family.

Its subcellular location is the cytoplasm. The enzyme catalyses L-homoserine + succinyl-CoA = O-succinyl-L-homoserine + CoA. It participates in amino-acid biosynthesis; L-methionine biosynthesis via de novo pathway; O-succinyl-L-homoserine from L-homoserine: step 1/1. Functionally, transfers a succinyl group from succinyl-CoA to L-homoserine, forming succinyl-L-homoserine. This chain is Homoserine O-succinyltransferase, found in Bradyrhizobium japonicum.